Consider the following 535-residue polypeptide: CTP synthase (535 aa).

Residues 1–267 form an amidoligase domain region; sequence MTKYIFVTGG…DSLVCSHLKL (267 aa). Ser13 contacts CTP. Ser13 provides a ligand contact to UTP. Residue 14–19 participates in ATP binding; sequence SLGKGI. Tyr54 lines the L-glutamine pocket. ATP is bound at residue Asp71. 2 residues coordinate Mg(2+): Asp71 and Glu141. CTP contacts are provided by residues 148–150, 188–193, and Lys224; these read DIE and KTKPTQ. UTP-binding positions include 188-193 and Lys224; that span reads KTKPTQ. One can recognise a Glutamine amidotransferase type-1 domain in the interval 292-534; that stretch reads TIALVGKYVE…VHASLKTSEK (243 aa). Residue Gly354 coordinates L-glutamine. The active-site Nucleophile; for glutamine hydrolysis is Cys381. L-glutamine-binding positions include 382-385, Glu405, and Arg462; that span reads LGMQ. Catalysis depends on residues His507 and Glu509.

Belongs to the CTP synthase family. In terms of assembly, homotetramer.

It catalyses the reaction UTP + L-glutamine + ATP + H2O = CTP + L-glutamate + ADP + phosphate + 2 H(+). The enzyme catalyses L-glutamine + H2O = L-glutamate + NH4(+). It carries out the reaction UTP + NH4(+) + ATP = CTP + ADP + phosphate + 2 H(+). It participates in pyrimidine metabolism; CTP biosynthesis via de novo pathway; CTP from UDP: step 2/2. Its activity is regulated as follows. Allosterically activated by GTP, when glutamine is the substrate; GTP has no effect on the reaction when ammonia is the substrate. The allosteric effector GTP functions by stabilizing the protein conformation that binds the tetrahedral intermediate(s) formed during glutamine hydrolysis. Inhibited by the product CTP, via allosteric rather than competitive inhibition. Catalyzes the ATP-dependent amination of UTP to CTP with either L-glutamine or ammonia as the source of nitrogen. Regulates intracellular CTP levels through interactions with the four ribonucleotide triphosphates. The chain is CTP synthase from Bacillus licheniformis (strain ATCC 14580 / DSM 13 / JCM 2505 / CCUG 7422 / NBRC 12200 / NCIMB 9375 / NCTC 10341 / NRRL NRS-1264 / Gibson 46).